A 138-amino-acid polypeptide reads, in one-letter code: Thyrotropin subunit beta (138 aa).

A signal peptide spans 1–20 (MTAIFLMSMVFGLACGQTMS). Cystine bridges form between Cys22/Cys72, Cys36/Cys87, Cys39/Cys125, Cys47/Cys103, Cys51/Cys105, and Cys108/Cys115. An N-linked (GlcNAc...) asparagine glycan is attached at Asn43. Positions 133–138 (VVEFSI) are excised as a propeptide.

Belongs to the glycoprotein hormones subunit beta family. Heterodimer of a common alpha chain and a unique beta chain which confers biological specificity to thyrotropin, lutropin, follitropin and gonadotropin.

The protein localises to the secreted. In terms of biological role, indispensable for the control of thyroid structure and metabolism. The sequence is that of Thyrotropin subunit beta (TSHB) from Equus caballus (Horse).